A 141-amino-acid polypeptide reads, in one-letter code: Galactose-6-phosphate isomerase subunit LacA (141 aa).

The protein belongs to the LacAB/RpiB family. As to quaternary structure, heteromultimeric protein consisting of LacA and LacB.

The enzyme catalyses aldehydo-D-galactose 6-phosphate = keto-D-tagatose 6-phosphate. Its pathway is carbohydrate metabolism; D-galactose 6-phosphate degradation; D-tagatose 6-phosphate from D-galactose 6-phosphate: step 1/1. This is Galactose-6-phosphate isomerase subunit LacA from Streptococcus pneumoniae (strain 70585).